We begin with the raw amino-acid sequence, 137 residues long: Probable Hsp20 family chaperone (137 aa).

Residues 25–137 enclose the sHSP domain; sequence LTNNNNIMKT…PKEKHYIKLN (113 aa).

The protein belongs to the small heat shock protein (HSP20) family.

Probable chaperone. This chain is Probable Hsp20 family chaperone, found in Onion yellows phytoplasma (strain OY-M).